The sequence spans 377 residues: Nitric oxide reductase FlRd-NAD(+) reductase (377 aa).

It belongs to the FAD-dependent oxidoreductase family. Requires FAD as cofactor.

It is found in the cytoplasm. The catalysed reaction is 2 reduced [nitric oxide reductase rubredoxin domain] + NAD(+) + H(+) = 2 oxidized [nitric oxide reductase rubredoxin domain] + NADH. It participates in nitrogen metabolism; nitric oxide reduction. In terms of biological role, one of at least two accessory proteins for anaerobic nitric oxide (NO) reductase. Reduces the rubredoxin moiety of NO reductase. The sequence is that of Nitric oxide reductase FlRd-NAD(+) reductase from Salmonella heidelberg (strain SL476).